A 501-amino-acid polypeptide reads, in one-letter code: Ribose import ATP-binding protein RbsA (501 aa).

ABC transporter domains lie at 6–242 (LQLS…VGRK) and 253–495 (VHGQ…VGKK). 38–45 (GENGAGKS) is a binding site for ATP.

Belongs to the ABC transporter superfamily. Ribose importer (TC 3.A.1.2.1) family. The complex is composed of an ATP-binding protein (RbsA), two transmembrane proteins (RbsC) and a solute-binding protein (RbsB).

Its subcellular location is the cell inner membrane. It carries out the reaction D-ribose(out) + ATP + H2O = D-ribose(in) + ADP + phosphate + H(+). Functionally, part of the ABC transporter complex RbsABC involved in ribose import. Responsible for energy coupling to the transport system. In Vibrio vulnificus (strain YJ016), this protein is Ribose import ATP-binding protein RbsA.